The chain runs to 427 residues: Serine--tRNA ligase (427 aa).

Residue 235–237 coordinates L-serine; sequence TAE. ATP contacts are provided by residues 266-268 and Val-282; that span reads RRE. L-serine is bound at residue Glu-289. 353–356 provides a ligand contact to ATP; that stretch reads EASS. Ser-389 is an L-serine binding site.

It belongs to the class-II aminoacyl-tRNA synthetase family. Type-1 seryl-tRNA synthetase subfamily. As to quaternary structure, homodimer. The tRNA molecule binds across the dimer.

The protein resides in the cytoplasm. It carries out the reaction tRNA(Ser) + L-serine + ATP = L-seryl-tRNA(Ser) + AMP + diphosphate + H(+). The catalysed reaction is tRNA(Sec) + L-serine + ATP = L-seryl-tRNA(Sec) + AMP + diphosphate + H(+). The protein operates within aminoacyl-tRNA biosynthesis; selenocysteinyl-tRNA(Sec) biosynthesis; L-seryl-tRNA(Sec) from L-serine and tRNA(Sec): step 1/1. Its function is as follows. Catalyzes the attachment of serine to tRNA(Ser). Is also able to aminoacylate tRNA(Sec) with serine, to form the misacylated tRNA L-seryl-tRNA(Sec), which will be further converted into selenocysteinyl-tRNA(Sec). The chain is Serine--tRNA ligase from Chloroherpeton thalassium (strain ATCC 35110 / GB-78).